Here is a 540-residue protein sequence, read N- to C-terminus: Malolactic enzyme (540 aa).

The active-site Proton donor is tyrosine 90. The Proton acceptor role is filled by lysine 163. Lysine 163 is a binding site for substrate. Mn(2+) is bound by residues glutamate 234, aspartate 235, and aspartate 258. NAD(+) contacts are provided by residues 291–294, asparagine 403, and asparagine 448; that span reads GGSA. Asparagine 448 provides a ligand contact to substrate.

Belongs to the malic enzymes family. In terms of assembly, homodimer. Requires Mn(2+) as cofactor. The cofactor is NAD(+).

The enzyme catalyses (S)-malate + H(+) = (S)-lactate + CO2. Involved in the malolactic fermentation (MLF) of wine, which results in a natural decrease in acidity and favorable changes in wine flavors. Catalyzes the decarboxylation of L-malate to L-lactate. The sequence is that of Malolactic enzyme from Lactococcus lactis subsp. lactis (strain IL1403) (Streptococcus lactis).